The primary structure comprises 380 residues: Crotonobetainyl-CoA reductase (380 aa).

It belongs to the acyl-CoA dehydrogenase family. Homotetramer. Requires FAD as cofactor.

It localises to the cytoplasm. The catalysed reaction is 4-(trimethylamino)butanoyl-CoA + oxidized [electron-transfer flavoprotein] + H(+) = crotonobetainyl-CoA + reduced [electron-transfer flavoprotein]. The protein operates within amine and polyamine metabolism; carnitine metabolism. In terms of biological role, catalyzes the reduction of crotonobetainyl-CoA to gamma-butyrobetainyl-CoA. The protein is Crotonobetainyl-CoA reductase of Citrobacter koseri (strain ATCC BAA-895 / CDC 4225-83 / SGSC4696).